The sequence spans 723 residues: Peroxisomal bifunctional enzyme (723 aa).

Positions 1 to 282 (MAEYTRLHNA…LAERKANKWS (282 aa)) are enoyl-CoA hydratase / isomerase. Position 38 is an N6-succinyllysine (lysine 38). Glycine 101 contacts substrate. Lysine 165 carries the post-translational modification N6-acetyllysine; alternate. Residue lysine 165 is modified to N6-succinyllysine; alternate. The residue at position 171 (lysine 171) is an N6-acetyllysine. Residue lysine 219 is modified to N6-acetyllysine; alternate. Lysine 219 bears the N6-succinyllysine; alternate mark. Lysine 250 carries the post-translational modification N6-acetyllysine. N6-succinyllysine occurs at positions 280 and 290. Residues 283–572 (TPSGASWKTA…DVLCELGRFG (290 aa)) form a 3-hydroxyacyl-CoA dehydrogenase region. Residues lysine 346, lysine 350, and lysine 464 each carry the N6-acetyllysine modification. An N6-succinyllysine modification is found at lysine 532. Threonine 548 carries the phosphothreonine modification. Residue lysine 577 is modified to N6-succinyllysine. An N6-acetyllysine; alternate mark is found at lysine 584, lysine 591, and lysine 710. Residues lysine 584, lysine 591, and lysine 710 each carry the N6-succinyllysine; alternate modification. Residues 699–723 (KKLASQGNPPQKEWQSLAGSPSSKL) are disordered. The segment covering 703 to 723 (SQGNPPQKEWQSLAGSPSSKL) has biased composition (polar residues). At serine 718 the chain carries Phosphoserine. The Microbody targeting signal motif lies at 721–723 (SKL). The residue at position 722 (lysine 722) is an N6-succinyllysine.

In the N-terminal section; belongs to the enoyl-CoA hydratase/isomerase family. It in the C-terminal section; belongs to the 3-hydroxyacyl-CoA dehydrogenase family. As to quaternary structure, monomer. Post-translationally, acetylated, leading to enhanced enzyme activity. Acetylation is enhanced by up to 80% after treatment either with trichostin A (TSA) or with nicotinamide (NAM) with highest increase on Lys-346. Acetylation and enzyme activity increased by about 1.5% on addition of fatty acids.

It is found in the peroxisome. The catalysed reaction is a (3S)-3-hydroxyacyl-CoA = a (2E)-enoyl-CoA + H2O. It carries out the reaction a 4-saturated-(3S)-3-hydroxyacyl-CoA = a (3E)-enoyl-CoA + H2O. It catalyses the reaction a (3Z)-enoyl-CoA = a 4-saturated (2E)-enoyl-CoA. The enzyme catalyses a (3E)-enoyl-CoA = a 4-saturated (2E)-enoyl-CoA. The catalysed reaction is a (3S)-3-hydroxyacyl-CoA + NAD(+) = a 3-oxoacyl-CoA + NADH + H(+). It carries out the reaction (2S,3S)-3-hydroxy-2-methylbutanoyl-CoA = (2E)-2-methylbut-2-enoyl-CoA + H2O. It catalyses the reaction (3S)-hydroxyhexadecanoyl-CoA + NAD(+) = 3-oxohexadecanoyl-CoA + NADH + H(+). The enzyme catalyses (3S)-hydroxyhexadecanoyl-CoA = (2E)-hexadecenoyl-CoA + H2O. The catalysed reaction is (2E)-hexadecenedioyl-CoA + H2O = (3S)-hydroxyhexadecanedioyl-CoA. It carries out the reaction (3S)-hydroxyhexadecanedioyl-CoA + NAD(+) = 3-oxohexadecanedioyl-CoA + NADH + H(+). It catalyses the reaction (3E,5Z)-tetradecadienoyl-CoA = (2E,5Z)-tetradecadienoyl-CoA. The enzyme catalyses (3E,5Z)-octadienoyl-CoA = (2E,5Z)-octadienoyl-CoA. The catalysed reaction is (3S)-hydroxydecanoyl-CoA + NAD(+) = 3-oxodecanoyl-CoA + NADH + H(+). It carries out the reaction (3E)-decenoyl-CoA = (2E)-decenoyl-CoA. It catalyses the reaction (3Z)-hexenoyl-CoA = (2E)-hexenoyl-CoA. The enzyme catalyses (3E)-hexenoyl-CoA = (2E)-hexenoyl-CoA. The catalysed reaction is (3S)-hydroxydecanoyl-CoA = (2E)-decenoyl-CoA + H2O. It carries out the reaction (3S)-hydroxyhexanoyl-CoA = (2E)-hexenoyl-CoA + H2O. The protein operates within lipid metabolism; fatty acid beta-oxidation. With respect to regulation, enzyme activity enhanced by acetylation. Peroxisomal trifunctional enzyme possessing 2-enoyl-CoA hydratase, 3-hydroxyacyl-CoA dehydrogenase, and delta 3, delta 2-enoyl-CoA isomerase activities. Catalyzes two of the four reactions of the long chain fatty acids peroxisomal beta-oxidation pathway. Can also use branched-chain fatty acids such as 2-methyl-2E-butenoyl-CoA as a substrate, which is hydrated into (2S,3S)-3-hydroxy-2-methylbutanoyl-CoA. Optimal isomerase for 2,5 double bonds into 3,5 form isomerization in a range of enoyl-CoA species. Also able to isomerize both 3-cis and 3-trans double bonds into the 2-trans form in a range of enoyl-CoA species. Regulates the amount of medium-chain dicarboxylic fatty acids which are essential regulators of all fatty acid oxidation pathways. Also involved in the degradation of long-chain dicarboxylic acids through peroxisomal beta-oxidation. This chain is Peroxisomal bifunctional enzyme (EHHADH), found in Pongo abelii (Sumatran orangutan).